Reading from the N-terminus, the 361-residue chain is Phosphoserine aminotransferase (361 aa).

L-glutamate is bound at residue R43. Pyridoxal 5'-phosphate is bound by residues 77–78 (AS), W103, T153, D173, and Q196. K197 carries the N6-(pyridoxal phosphate)lysine modification. Residue 238–239 (NT) participates in pyridoxal 5'-phosphate binding.

Belongs to the class-V pyridoxal-phosphate-dependent aminotransferase family. SerC subfamily. In terms of assembly, homodimer. It depends on pyridoxal 5'-phosphate as a cofactor.

It is found in the cytoplasm. The catalysed reaction is O-phospho-L-serine + 2-oxoglutarate = 3-phosphooxypyruvate + L-glutamate. The enzyme catalyses 4-(phosphooxy)-L-threonine + 2-oxoglutarate = (R)-3-hydroxy-2-oxo-4-phosphooxybutanoate + L-glutamate. The protein operates within amino-acid biosynthesis; L-serine biosynthesis; L-serine from 3-phospho-D-glycerate: step 2/3. Catalyzes the reversible conversion of 3-phosphohydroxypyruvate to phosphoserine and of 3-hydroxy-2-oxo-4-phosphonooxybutanoate to phosphohydroxythreonine. In Alkalihalobacillus alcalophilus (Bacillus alcalophilus), this protein is Phosphoserine aminotransferase (serC).